We begin with the raw amino-acid sequence, 158 residues long: Transcriptional repressor NrdR (158 aa).

A zinc finger spans residues 3–34 (CPFCGSLDTQVIDSRANEAGDAIRRRRRCAAC). Residues 49–139 (PQIVKTNGTR…VYKSFKDPDD (91 aa)) enclose the ATP-cone domain.

The protein belongs to the NrdR family. Zn(2+) serves as cofactor.

Negatively regulates transcription of bacterial ribonucleotide reductase nrd genes and operons by binding to NrdR-boxes. The chain is Transcriptional repressor NrdR from Thiobacillus denitrificans (strain ATCC 25259 / T1).